Here is a 549-residue protein sequence, read N- to C-terminus: Glucose-6-phosphate isomerase (549 aa).

Residue glutamate 355 is the Proton donor of the active site. Catalysis depends on residues histidine 386 and lysine 514.

The protein belongs to the GPI family.

The protein resides in the cytoplasm. It carries out the reaction alpha-D-glucose 6-phosphate = beta-D-fructose 6-phosphate. It participates in carbohydrate biosynthesis; gluconeogenesis. Its pathway is carbohydrate degradation; glycolysis; D-glyceraldehyde 3-phosphate and glycerone phosphate from D-glucose: step 2/4. In terms of biological role, catalyzes the reversible isomerization of glucose-6-phosphate to fructose-6-phosphate. This Salmonella arizonae (strain ATCC BAA-731 / CDC346-86 / RSK2980) protein is Glucose-6-phosphate isomerase.